Here is a 372-residue protein sequence, read N- to C-terminus: Putative isochorismate synthase MenF (372 aa).

Lysine 119 acts as the Proton acceptor in catalysis. Glutamate 175 serves as the catalytic Proton donor. Residues glutamate 219 and glutamate 356 each contribute to the Mg(2+) site.

This sequence belongs to the isochorismate synthase family. Mg(2+) is required as a cofactor.

It catalyses the reaction chorismate = isochorismate. The protein operates within quinol/quinone metabolism; 1,4-dihydroxy-2-naphthoate biosynthesis; 1,4-dihydroxy-2-naphthoate from chorismate: step 1/7. It functions in the pathway quinol/quinone metabolism; menaquinone biosynthesis. Catalyzes the conversion of chorismate to isochorismate. This chain is Putative isochorismate synthase MenF (menF), found in Mycobacterium tuberculosis (strain CDC 1551 / Oshkosh).